A 113-amino-acid polypeptide reads, in one-letter code: MSDIIARGNVENGDKLFKARCAQCHTTANGAPNKQGPNLYGLFFPKSRSFPGYAYSDPNKNTGKFCIMWGEQTLFDYLENPKKYIPKTKMAFAGFKSEQDRADVVAYLEQSTK.

Residues C21, C24, H25, and M90 each coordinate heme c.

The protein belongs to the cytochrome c family. Post-translationally, binds 1 heme c group covalently per subunit.

It is found in the mitochondrion intermembrane space. Functionally, electron carrier protein. The oxidized form of the cytochrome c heme group can accept an electron from the heme group of the cytochrome c1 subunit of cytochrome reductase. Cytochrome c then transfers this electron to the cytochrome oxidase complex, the final protein carrier in the mitochondrial electron-transport chain. This Dictyostelium discoideum (Social amoeba) protein is Cytochrome c (cytC).